The chain runs to 170 residues: Neurotensin/neuromedin N (170 aa).

The signal sequence occupies residues 1–23; sequence MMAGMKIQLVCMLLLAFSSWSLC. Gln-151 bears the Pyrrolidone carboxylic acid mark.

This sequence belongs to the neurotensin family. As to quaternary structure, interacts with NTSR1. Interacts with SORT1. Interacts with SORL1. Post-translationally, neurotensin is cleaved and degraded by Angiotensin-converting enzyme (ACE) and neprilysin (MME).

The protein resides in the secreted. It is found in the cytoplasmic vesicle. It localises to the secretory vesicle. Neurotensin may play an endocrine or paracrine role in the regulation of fat metabolism. It causes contraction of smooth muscle. This chain is Neurotensin/neuromedin N (NTS), found in Homo sapiens (Human).